A 170-amino-acid polypeptide reads, in one-letter code: Peroxidase 2 (170 aa).

Residue asparagine 9 is glycosylated (N-linked (GlcNAc...) asparagine). Position 24 (histidine 24) interacts with heme b. Position 25 (threonine 25) interacts with Ca(2+). Cysteines 31 and 59 form a disulfide. Ca(2+) is bound by residues aspartate 73, threonine 76, and aspartate 81.

This sequence belongs to the peroxidase family. Classical plant (class III) peroxidase subfamily. The cofactor is Ca(2+). Requires heme b as cofactor.

The enzyme catalyses 2 a phenolic donor + H2O2 = 2 a phenolic radical donor + 2 H2O. Removal of H(2)O(2), oxidation of toxic reductants, biosynthesis and degradation of lignin, suberization, auxin catabolism, response to environmental stresses such as wounding, pathogen attack and oxidative stress. These functions might be dependent on each isozyme/isoform in each plant tissue. Functionally, involved in defense response to powdery meldew fungus. This is Peroxidase 2 from Hordeum vulgare (Barley).